Reading from the N-terminus, the 496-residue chain is Probable malate:quinone oxidoreductase (496 aa).

It belongs to the MQO family. It depends on FAD as a cofactor.

The enzyme catalyses (S)-malate + a quinone = a quinol + oxaloacetate. Its pathway is carbohydrate metabolism; tricarboxylic acid cycle; oxaloacetate from (S)-malate (quinone route): step 1/1. The chain is Probable malate:quinone oxidoreductase from Prochlorococcus marinus (strain MIT 9313).